Here is a 48-residue protein sequence, read N- to C-terminus: Histone H4 (48 aa).

The segment covering 1 to 14 (MGGKGGKGGKGLGK) has biased composition (gly residues). The segment at 1-23 (MGGKGGKGGKGLGKVGAKKRHSR) is disordered.

It belongs to the histone H4 family. In terms of assembly, the nucleosome is a histone octamer containing two molecules each of H2A, H2B, H3 and H4 assembled in one H3-H4 heterotetramer and two H2A-H2B heterodimers. The octamer wraps approximately 147 bp of DNA.

It localises to the nucleus. The protein resides in the chromosome. Core component of nucleosome. Nucleosomes wrap and compact DNA into chromatin, limiting DNA accessibility to the cellular machineries which require DNA as a template. Histones thereby play a central role in transcription regulation, DNA repair, DNA replication and chromosomal stability. DNA accessibility is regulated via a complex set of post-translational modifications of histones, also called histone code, and nucleosome remodeling. In Blepharisma japonicum, this protein is Histone H4.